We begin with the raw amino-acid sequence, 151 residues long: Neuroglobin (151 aa).

A Globin domain is found at 1–149 (MERPEPELIR…VVQAMSRGWD (149 aa)). The heme b site is built by histidine 64 and histidine 96.

Belongs to the globin family. Monomer. Homodimer and homotetramer; disulfide-linked. Mainly monomeric but also detected as part of homodimers and homotetramers. Interacts with 14-3-3 proteins; regulates the phosphorylation of NGB. Could interact (ferrous form) with G-alpha(i) proteins (GTP-bound form). Phosphorylated during hypoxia by ERK1/ERK2. Phosphorylation regulates the heme pocket hexacoordination preventing the association of His-64 with the heme metal center. Thereby, promotes the access of dioxygen and nitrite to the heme and stimulates the nitrite reductase activity. Phosphorylation during hypoxia is stabilized by 14-3-3 proteins.

It is found in the cytoplasm. The protein localises to the cytosol. It localises to the mitochondrion matrix. It catalyses the reaction Fe(III)-heme b-[protein] + nitric oxide + H2O = Fe(II)-heme b-[protein] + nitrite + 2 H(+). Monomeric globin with a bis-histidyl six-coordinate heme-iron atom through which it can bind dioxygen, carbon monoxide and nitric oxide. Could help transport oxygen and increase its availability to the metabolically active neuronal tissues, though its low quantity in tissues as well as its high affinity for dioxygen, which may limit its oxygen-releasing ability, argue against it. The ferrous/deoxygenated form exhibits a nitrite reductase activity and it could produce nitric oxide which in turn inhibits cellular respiration in response to hypoxia. In its ferrous/deoxygenated state, it may also exhibit GDI (Guanine nucleotide Dissociation Inhibitor) activity toward heterotrimeric G-alpha proteins, thereby regulating signal transduction to facilitate neuroprotective responses in the wake of hypoxia and associated oxidative stress. This chain is Neuroglobin, found in Canis lupus familiaris (Dog).